The primary structure comprises 194 residues: Thioredoxin peroxidase (194 aa).

The Thioredoxin domain maps to 2 to 160; it reads LQPNMPAPNF…ALRLLDAFIF (159 aa). Residue Cys47 is the Cysteine sulfenic acid (-SOH) intermediate of the active site.

It belongs to the peroxiredoxin family. AhpC/Prx1 subfamily. As to quaternary structure, homodimer; disulfide-linked, upon oxidation.

The catalysed reaction is a hydroperoxide + [thioredoxin]-dithiol = an alcohol + [thioredoxin]-disulfide + H2O. Antioxidant. Could be involved in protection against reactive oxygen species (ROS) generated by metabolic processes and/or protection of the parasite against ROS released by immune effector cells. In terms of biological role, thiol-specific peroxidase that catalyzes the reduction of hydrogen peroxide and organic hydroperoxides to water and alcohols, respectively. Plays a role in cell protection against oxidative stress by detoxifying peroxides and as sensor of hydrogen peroxide-mediated signaling events. The chain is Thioredoxin peroxidase from Fasciola hepatica (Liver fluke).